We begin with the raw amino-acid sequence, 84 residues long: Large ribosomal subunit protein uL23 (84 aa).

It belongs to the universal ribosomal protein uL23 family. In terms of assembly, part of the 50S ribosomal subunit. Contacts protein L29.

Functionally, binds to 23S rRNA. One of the proteins that surrounds the polypeptide exit tunnel on the outside of the ribosome. The sequence is that of Large ribosomal subunit protein uL23 from Halobacterium salinarum (strain ATCC 700922 / JCM 11081 / NRC-1) (Halobacterium halobium).